Reading from the N-terminus, the 514-residue chain is tRNA-2-methylthio-N(6)-dimethylallyladenosine synthase (514 aa).

The disordered stretch occupies residues 1-21 (MNEEQRKASSVDVLAERDKKA). The MTTase N-terminal domain occupies 68-186 (RTFLIKTYGC…LPEILEEAYL (119 aa)). Residues Cys-77, Cys-113, Cys-147, Cys-223, Cys-227, and Cys-230 each contribute to the [4Fe-4S] cluster site. Residues 209-440 (REGNIKAWVN…KKVGHYSQIA (232 aa)) enclose the Radical SAM core domain. Positions 442–505 (SKYEGQTVTV…QYSLNGSFIK (64 aa)) constitute a TRAM domain.

It belongs to the methylthiotransferase family. MiaB subfamily. In terms of assembly, monomer. Requires [4Fe-4S] cluster as cofactor.

It is found in the cytoplasm. The enzyme catalyses N(6)-dimethylallyladenosine(37) in tRNA + (sulfur carrier)-SH + AH2 + 2 S-adenosyl-L-methionine = 2-methylsulfanyl-N(6)-dimethylallyladenosine(37) in tRNA + (sulfur carrier)-H + 5'-deoxyadenosine + L-methionine + A + S-adenosyl-L-homocysteine + 2 H(+). Functionally, catalyzes the methylthiolation of N6-(dimethylallyl)adenosine (i(6)A), leading to the formation of 2-methylthio-N6-(dimethylallyl)adenosine (ms(2)i(6)A) at position 37 in tRNAs that read codons beginning with uridine. The protein is tRNA-2-methylthio-N(6)-dimethylallyladenosine synthase of Staphylococcus aureus (strain USA300 / TCH1516).